A 112-amino-acid polypeptide reads, in one-letter code: UPF0342 protein SP_1372 (112 aa).

The protein belongs to the UPF0342 family.

This is UPF0342 protein SP_1372 from Streptococcus pneumoniae serotype 4 (strain ATCC BAA-334 / TIGR4).